Reading from the N-terminus, the 156-residue chain is MSKLQFVWVGKLKEPFFRDACAHYTKKLGRFHKLDETILKDAPGKLPPMDKVQHEGKAIMARIKPSDMLICLDEKGKEMTSVELSKHLQRWTEDPNLTPTFVIGGPFGLADEVKNAARVKLSLSKMTLPHELARTMLLEQLYRAASILRGSPYHHV.

S-adenosyl-L-methionine is bound by residues L72, G104, and 123 to 128 (LSKMTL).

Belongs to the RNA methyltransferase RlmH family. In terms of assembly, homodimer.

It is found in the cytoplasm. The enzyme catalyses pseudouridine(1915) in 23S rRNA + S-adenosyl-L-methionine = N(3)-methylpseudouridine(1915) in 23S rRNA + S-adenosyl-L-homocysteine + H(+). Specifically methylates the pseudouridine at position 1915 (m3Psi1915) in 23S rRNA. This Maridesulfovibrio salexigens (strain ATCC 14822 / DSM 2638 / NCIMB 8403 / VKM B-1763) (Desulfovibrio salexigens) protein is Ribosomal RNA large subunit methyltransferase H.